Consider the following 384-residue polypeptide: Cytochrome b (384 aa).

A run of 4 helical transmembrane segments spans residues 33-53, 77-98, 113-133, and 178-198; these read YGSL…FLAM, WLIR…YLHI, WNVG…GYVL, and FFAF…IHLL. Residues H83 and H97 each coordinate heme b. The heme b site is built by H182 and H196. An a ubiquinone-binding site is contributed by H201. 4 consecutive transmembrane segments (helical) span residues 226–246, 288–308, 320–340, and 347–367; these read YKDL…ALFT, LGGV…PILH, LSQM…WIGG, and FIII…VLMP.

It belongs to the cytochrome b family. In terms of assembly, the cytochrome bc1 complex contains 3 respiratory subunits (MT-CYB, CYC1 and UQCRFS1), 2 core proteins (UQCRC1 and UQCRC2) and probably 6 low-molecular weight proteins. Requires heme b as cofactor.

The protein resides in the mitochondrion inner membrane. In terms of biological role, component of the ubiquinol-cytochrome c reductase complex (complex III or cytochrome b-c1 complex) that is part of the mitochondrial respiratory chain. The b-c1 complex mediates electron transfer from ubiquinol to cytochrome c. Contributes to the generation of a proton gradient across the mitochondrial membrane that is then used for ATP synthesis. This Anoplogaster cornuta (Common fangtooth) protein is Cytochrome b (mt-cyb).